Here is a 260-residue protein sequence, read N- to C-terminus: Collagenase (260 aa).

Residues 1–16 (MKFLLVFALALATTSA) form the signal peptide. A propeptide spanning residues 17–30 (FQHPASIFELREGR) is cleaved from the precursor. A Peptidase S1 domain is found at 31–257 (IINGYEAYTG…YMDWIQQNTG (227 aa)). Cys60 and Cys76 form a disulfide bridge. Active-site charge relay system residues include His75 and Asp118. Cystine bridges form between Cys181–Cys196 and Cys206–Cys234. Ser210 serves as the catalytic Charge relay system.

Belongs to the peptidase S1 family.

Its subcellular location is the secreted. The catalysed reaction is Hydrolysis of proteins including native collagen at Xaa-|-Ala bond leaving an N-terminal (75%) and a C-terminal (25%) fragment.. Inhibited by diisopropylfluorophosphate. Functionally, this enzyme is a serine protease capable of degrading the native triple helix of collagen. Also cleaves the B chain of insulin at the 15-Leu-|-Try-16 and 22-Arg-|-Gly-23 bonds. Hydrolyzes casein, but not Px-Pro-Leu-Gly-Pro-DArg, BzArgNHPh, AcTyrNHPh, 2-naphthyl phosphate, 2-naphthyl butyrate, 2-naphthyl caprylate, 2-naphthyl myristate, L-leucine 2-2-naphthylamide, L-valine 2-naphthylamide, L-cysteine 2-naphthylamide or L-glutarylphenylalanine 2-naphthylamide. This Hypoderma lineatum (Early cattle grub) protein is Collagenase.